The following is a 233-amino-acid chain: Probable F-box protein At3g56670 (233 aa).

The 48-residue stretch at 22–69 (HGGVIDIPLNTDSGVTKNTPGEIALLRFKSVSKLWSSIISSRRDFIES) folds into the F-box domain.

The chain is Probable F-box protein At3g56670 from Arabidopsis thaliana (Mouse-ear cress).